A 512-amino-acid polypeptide reads, in one-letter code: 2-isopropylmalate synthase (512 aa).

One can recognise a Pyruvate carboxyltransferase domain in the interval valine 5–tyrosine 267. Mn(2+) contacts are provided by aspartate 14, histidine 202, histidine 204, and asparagine 238. Residues serine 391 to valine 512 are regulatory domain.

This sequence belongs to the alpha-IPM synthase/homocitrate synthase family. LeuA type 1 subfamily. In terms of assembly, homodimer. Mn(2+) serves as cofactor.

It localises to the cytoplasm. It carries out the reaction 3-methyl-2-oxobutanoate + acetyl-CoA + H2O = (2S)-2-isopropylmalate + CoA + H(+). It functions in the pathway amino-acid biosynthesis; L-leucine biosynthesis; L-leucine from 3-methyl-2-oxobutanoate: step 1/4. In terms of biological role, catalyzes the condensation of the acetyl group of acetyl-CoA with 3-methyl-2-oxobutanoate (2-ketoisovalerate) to form 3-carboxy-3-hydroxy-4-methylpentanoate (2-isopropylmalate). The polypeptide is 2-isopropylmalate synthase (Heliobacterium modesticaldum (strain ATCC 51547 / Ice1)).